Consider the following 616-residue polypeptide: Chaperone protein HscA (616 aa).

The protein belongs to the heat shock protein 70 family.

Functionally, chaperone involved in the maturation of iron-sulfur cluster-containing proteins. Has a low intrinsic ATPase activity which is markedly stimulated by HscB. Involved in the maturation of IscU. The polypeptide is Chaperone protein HscA (Salmonella heidelberg (strain SL476)).